Reading from the N-terminus, the 808-residue chain is Homeobox-leucine zipper protein HDG1 (808 aa).

Positions 57 to 121 are disordered; it reads LQTNGEMSRN…KRYHRHTPKQ (65 aa). A compositionally biased stretch (basic and acidic residues) spans 79–90; the sequence is SRGEDVESRSES. The span at 108–119 shows a compositional bias: basic residues; it reads LKKKKRYHRHTP. Residues 110 to 169 constitute a DNA-binding region (homeobox); sequence KKKRYHRHTPKQIQDLESVFKECAHPDEKQRLDLSRRLNLDPRQVKFWFQNRRTQMKTQI. The stretch at 158 to 233 forms a coiled coil; the sequence is FQNRRTQMKT…SRLKDELDRV (76 aa). Residues 310–541 form the START domain; that stretch reads DFDQRSRYLD…LQRQCECLTI (232 aa).

Belongs to the HD-ZIP homeobox family. Class IV subfamily. Interacts with CFL1. Binds with BBM. As to expression, expressed in trichomes forming at the base of young leaves, in endodermal cell lines around emergent lateral roots and in the epidermal layer of the stamen filament.

Its subcellular location is the nucleus. Functionally, probable transcription factor. Promotes cuticle development probably by modulating the expression of the downstream genes BDG and FDH, possibly repressed in a CFL1-dependent manner. Involved, together with PDF2, in the regulation of flower organs development by promoting the expression of APETALA 3 (AP3) in the epidermis and internal cell layers of developing flowers. In opposition to BBM, seems to promote cell differentiation and giant cell identity via transcriptional repression of meristem and cell proliferation genes. The chain is Homeobox-leucine zipper protein HDG1 from Arabidopsis thaliana (Mouse-ear cress).